The chain runs to 342 residues: (Lyso)-N-acylphosphatidylethanolamine lipase (342 aa).

The AB hydrolase-1 domain maps to 70 to 323; sequence PLVMVHGFGG…EIEGASHHVY (254 aa).

Belongs to the peptidase S33 family. ABHD4/ABHD5 subfamily. As to expression, highest levels in the CNS and in testis, intermediate levels in liver and kidney. Hardly detectable in heart.

The enzyme catalyses N-hexadecanoyl-1,2-di-(9Z-octadecenoyl)-sn-glycero-3-phosphoethanolamine + H2O = N-hexadecanoyl-1-(9Z-octadecenoyl)-sn-glycero-3-phosphoethanolamine + (9Z)-octadecenoate + H(+). The catalysed reaction is an N-acyl-1,2-diacyl-sn-glycero-3-phosphoethanolamine + H2O = N,1-diacyl-sn-glycero-3-phosphoethanolamine + a fatty acid + H(+). It catalyses the reaction N-hexadecanoyl-1-(9Z-octadecenoyl)-sn-glycero-3-phosphoethanolamine + H2O = N-hexadecanoyl-sn-glycero-3-phosphoethanolamine + (9Z)-octadecenoate + H(+). It carries out the reaction N-octadecanoyl-1-(9Z-octadecenoyl)-sn-glycero-3-phosphoethanolamine + H2O = N-octadecanoyl-sn-glycero-3-phospho-ethanolamine + (9Z)-octadecenoate + H(+). The enzyme catalyses N-eicosanoyl-1-(9Z-octadecenoyl)-sn-glycero-3-phosphoethanolamine + H2O = N-eicosanoyl-sn-glycero-3-phosphoethanolamine + (9Z)-octadecenoate + H(+). The catalysed reaction is N,1-di-(9Z-octadecenoyl)-sn-glycero-3-phosphoethanolamine + H2O = N-(9Z-octadecenoyl)-sn-glycero-3-phosphoethanolamine + (9Z)-octadecenoate + H(+). It catalyses the reaction N-(5Z,8Z,11Z,14Z-eicosatetraenoyl)-1-(9Z-octadecenoyl)-sn-glycero-3-phosphoethanolamine + H2O = N-(5Z,8Z,11Z,14Z-eicosatetraenoyl)-sn-glycero-3-phosphoethanolamine + (9Z)-octadecenoate + H(+). It carries out the reaction 1-octadecanoyl-2-(9Z-octadecenoyl)-sn-glycero-3-phospho-(N-hexadecanoyl)-serine + H2O = 1-octadecanoyl-2-hydroxy-sn-glycero-3-phospho-(N-hexadecanoyl)-serine + (9Z)-octadecenoate + H(+). The enzyme catalyses 1-O-(1Z-octadecenoyl)-2-(9Z-octadecenoyl)-sn-glycero-3-phospho-N-hexadecanoyl-ethanolamine + H2O = 1-O-(1Z-octadecenyl)-sn-glycero-3-phospho-N-hexadecanoyl-ethanolamine + (9Z)-octadecenoate + H(+). The catalysed reaction is N,1-diacyl-sn-glycero-3-phosphoethanolamine + H2O = N-acyl-sn-glycero-3-phosphoethanolamine + a fatty acid + H(+). Functionally, lysophospholipase selective for N-acyl phosphatidylethanolamine (NAPE). Contributes to the biosynthesis of N-acyl ethanolamines, including the endocannabinoid anandamide by hydrolyzing the sn-1 and sn-2 acyl chains from N-acyl phosphatidylethanolamine (NAPE) generating glycerophospho-N-acyl ethanolamine (GP-NAE), an intermediate for N-acyl ethanolamine biosynthesis. Hydrolyzes substrates bearing saturated, monounsaturated, polyunsaturated N-acyl chains. Shows no significant activity towards other lysophospholipids, including lysophosphatidylcholine, lysophosphatidylethanolamine and lysophosphatidylserine. This chain is (Lyso)-N-acylphosphatidylethanolamine lipase, found in Mus musculus (Mouse).